The following is a 402-amino-acid chain: Probable sugar efflux transporter (402 aa).

The next 12 helical transmembrane spans lie at 15–35 (VLIM…PVAM), 51–71 (GLMM…AMLA), 84–104 (LFII…FWIL), 109–129 (MCIA…VMRI), 137–157 (QALG…LPIG), 168–188 (VTFG…IRLL), 209–229 (PLLL…FTAY), 245–265 (NFAT…SLLF), 276–296 (FIVV…FSTE), 297–317 (AIIA…CIGL), 333–353 (VATA…ALFG), and 365–385 (IGYT…TTHL).

The protein belongs to the major facilitator superfamily. SotB (TC 2.A.1.2) family.

The protein resides in the cell inner membrane. Involved in the efflux of sugars. The physiological role may be the reduction of the intracellular concentration of toxic sugars or sugar metabolites. The protein is Probable sugar efflux transporter of Haemophilus influenzae (strain 86-028NP).